The primary structure comprises 142 residues: Nucleoside diphosphate kinase (142 aa).

ATP contacts are provided by Lys-9, Phe-57, Arg-85, Thr-91, Arg-102, and Asn-112. The Pros-phosphohistidine intermediate role is filled by His-115.

The protein belongs to the NDK family. Homotetramer. Mg(2+) is required as a cofactor.

It localises to the cytoplasm. The enzyme catalyses a 2'-deoxyribonucleoside 5'-diphosphate + ATP = a 2'-deoxyribonucleoside 5'-triphosphate + ADP. The catalysed reaction is a ribonucleoside 5'-diphosphate + ATP = a ribonucleoside 5'-triphosphate + ADP. In terms of biological role, major role in the synthesis of nucleoside triphosphates other than ATP. The ATP gamma phosphate is transferred to the NDP beta phosphate via a ping-pong mechanism, using a phosphorylated active-site intermediate. The protein is Nucleoside diphosphate kinase of Dehalococcoides mccartyi (strain ATCC BAA-2100 / JCM 16839 / KCTC 5957 / BAV1).